The primary structure comprises 479 residues: Ribosomal protein uS12 methylthiotransferase RimO (479 aa).

The interval 1 to 34 (MTVNTFDPSKASPVTHASDSASKTPEPNAVAAPS) is disordered. Positions 15-25 (THASDSASKTP) are enriched in polar residues. One can recognise an MTTase N-terminal domain in the interval 39-151 (NRVGFVSLGC…VMGAVHGYIP (113 aa)). [4Fe-4S] cluster contacts are provided by C48, C84, C113, C184, C188, and C191. One can recognise a Radical SAM core domain in the interval 170–407 (LTPRHYAYLK…METQQAISAA (238 aa)). The TRAM domain occupies 410 to 476 (KQKVGYEMDV…DYDLTGIAVE (67 aa)).

This sequence belongs to the methylthiotransferase family. RimO subfamily. Requires [4Fe-4S] cluster as cofactor.

It is found in the cytoplasm. It carries out the reaction L-aspartate(89)-[ribosomal protein uS12]-hydrogen + (sulfur carrier)-SH + AH2 + 2 S-adenosyl-L-methionine = 3-methylsulfanyl-L-aspartate(89)-[ribosomal protein uS12]-hydrogen + (sulfur carrier)-H + 5'-deoxyadenosine + L-methionine + A + S-adenosyl-L-homocysteine + 2 H(+). Its function is as follows. Catalyzes the methylthiolation of an aspartic acid residue of ribosomal protein uS12. This chain is Ribosomal protein uS12 methylthiotransferase RimO, found in Saccharophagus degradans (strain 2-40 / ATCC 43961 / DSM 17024).